Here is a 149-residue protein sequence, read N- to C-terminus: Calmodulin (149 aa).

N-acetylalanine is present on A2. 4 consecutive EF-hand domains span residues 8–43, 44–79, 81–116, and 117–149; these read DQIS…LGQN, PTEA…KMKD, DSEE…LGEK, and LTDE…MMAK. Positions 21, 23, 25, 27, 32, 57, 59, 61, 63, 68, 94, 96, 98, and 105 each coordinate Ca(2+). Position 116 is an N6,N6,N6-trimethyllysine (K116). Positions 130, 132, 134, 136, and 141 each coordinate Ca(2+).

This sequence belongs to the calmodulin family.

Functionally, calmodulin mediates the control of a large number of enzymes, ion channels and other proteins by Ca(2+). Among the enzymes to be stimulated by the calmodulin-Ca(2+) complex are a number of protein kinases and phosphatases. The sequence is that of Calmodulin (CCM1) from Capsicum annuum (Capsicum pepper).